A 297-amino-acid polypeptide reads, in one-letter code: tRNA pseudouridine synthase B (297 aa).

Asp-44 (nucleophile) is an active-site residue.

It belongs to the pseudouridine synthase TruB family. Type 1 subfamily.

The catalysed reaction is uridine(55) in tRNA = pseudouridine(55) in tRNA. Functionally, responsible for synthesis of pseudouridine from uracil-55 in the psi GC loop of transfer RNAs. The protein is tRNA pseudouridine synthase B of Corynebacterium aurimucosum (strain ATCC 700975 / DSM 44827 / CIP 107346 / CN-1) (Corynebacterium nigricans).